The primary structure comprises 158 residues: 6,7-dimethyl-8-ribityllumazine synthase (158 aa).

Residues Phe-22, 57–59 (AYE), and 81–83 (AVI) contribute to the 5-amino-6-(D-ribitylamino)uracil site. Residue 86 to 87 (GT) participates in (2S)-2-hydroxy-3-oxobutyl phosphate binding. The active-site Proton donor is His-89. Phe-114 is a binding site for 5-amino-6-(D-ribitylamino)uracil. Arg-128 lines the (2S)-2-hydroxy-3-oxobutyl phosphate pocket.

Belongs to the DMRL synthase family. Forms an icosahedral capsid composed of 60 subunits, arranged as a dodecamer of pentamers.

The catalysed reaction is (2S)-2-hydroxy-3-oxobutyl phosphate + 5-amino-6-(D-ribitylamino)uracil = 6,7-dimethyl-8-(1-D-ribityl)lumazine + phosphate + 2 H2O + H(+). It participates in cofactor biosynthesis; riboflavin biosynthesis; riboflavin from 2-hydroxy-3-oxobutyl phosphate and 5-amino-6-(D-ribitylamino)uracil: step 1/2. In terms of biological role, catalyzes the formation of 6,7-dimethyl-8-ribityllumazine by condensation of 5-amino-6-(D-ribitylamino)uracil with 3,4-dihydroxy-2-butanone 4-phosphate. This is the penultimate step in the biosynthesis of riboflavin. The protein is 6,7-dimethyl-8-ribityllumazine synthase of Pseudoalteromonas atlantica (strain T6c / ATCC BAA-1087).